The following is a 240-amino-acid chain: Orotidine 5'-phosphate decarboxylase (240 aa).

Substrate is bound by residues D15, K37, 64 to 73, T127, R188, Q197, G217, and R218; that span reads DLKYHDIPNT. K66 serves as the catalytic Proton donor.

The protein belongs to the OMP decarboxylase family. Type 1 subfamily. Homodimer.

It catalyses the reaction orotidine 5'-phosphate + H(+) = UMP + CO2. It functions in the pathway pyrimidine metabolism; UMP biosynthesis via de novo pathway; UMP from orotate: step 2/2. Functionally, catalyzes the decarboxylation of orotidine 5'-monophosphate (OMP) to uridine 5'-monophosphate (UMP). This is Orotidine 5'-phosphate decarboxylase from Citrifermentans bemidjiense (strain ATCC BAA-1014 / DSM 16622 / JCM 12645 / Bem) (Geobacter bemidjiensis).